The sequence spans 525 residues: BTB/POZ domain-containing protein At1g50280 (525 aa).

The BTB domain occupies 5–79 (NDLKINLNGQ…CYHNGEILID (75 aa)). The region spanning 200–466 (EWWFEDMTNL…IEALKSRCGN (267 aa)) is the NPH3 domain.

It belongs to the NPH3 family.

It participates in protein modification; protein ubiquitination. Its function is as follows. May act as a substrate-specific adapter of an E3 ubiquitin-protein ligase complex (CUL3-RBX1-BTB) which mediates the ubiquitination and subsequent proteasomal degradation of target proteins. The sequence is that of BTB/POZ domain-containing protein At1g50280 from Arabidopsis thaliana (Mouse-ear cress).